A 197-amino-acid chain; its full sequence is MPITPATATPSSSNGTAEAILLELVDENGVTIGTAEKLSAHQPPGRLHRAFSVFLFDERGRLLIQQRALGKYHSPGVWSNTCCGHPYPGEAPFAAAARRTFEELGVSPSLLAEAGTVRYNHPDPASGLVEQEYNHLFVGLVQAELRPDPEEVAGTAFVSPAELTERHAQDTFSAWFMTVLDAARPAVRELTGTSAGW.

Mn(2+) is bound by residues His-41 and His-48. Positions Arg-46–Ala-183 constitute a Nudix hydrolase domain. Cys-83 is a catalytic residue. Position 83 (Cys-83) interacts with Mg(2+). His-85 contributes to the Mn(2+) binding site. Glu-103 contacts Mg(2+). Residues Glu-130 and Glu-132 each contribute to the Mn(2+) site. Residue Glu-132 is part of the active site.

This sequence belongs to the IPP isomerase type 1 family. Requires Mg(2+) as cofactor. The cofactor is Mn(2+).

It is found in the cytoplasm. The enzyme catalyses isopentenyl diphosphate = dimethylallyl diphosphate. Its pathway is isoprenoid biosynthesis; dimethylallyl diphosphate biosynthesis; dimethylallyl diphosphate from isopentenyl diphosphate: step 1/1. Catalyzes the 1,3-allylic rearrangement of the homoallylic substrate isopentenyl (IPP) to its highly electrophilic allylic isomer, dimethylallyl diphosphate (DMAPP). This Streptomyces coelicolor (strain ATCC BAA-471 / A3(2) / M145) protein is Isopentenyl-diphosphate Delta-isomerase.